The chain runs to 364 residues: Zinc finger protein 474 (364 aa).

Residues 1-10 show a composition bias toward basic residues; the sequence is MERGKKKRIS. Disordered stretches follow at residues 1 to 21 and 37 to 60; these read MERGKKKRISNKLQQTFHHSK and SYSSLSPETESVNPGENIKTDTQK. The segment at 93 to 122 adopts a C2HC/C3H-type 1 zinc-finger fold; it reads GFRVCYICGREFGSQSIAIHEPQCLQKWHI. Zn(2+) is bound by residues Cys97, Cys100, His112, and Cys116. Positions 127–147 are disordered; sequence LPKHLRRPEPSKPQSLSSSGS. Residues 138 to 147 show a composition bias toward low complexity; it reads KPQSLSSSGS. C2HC/C3H-type zinc fingers lie at residues 164-193, 220-249, and 283-312; these read QLLPCESCGRTFLPDHLLVHHRSCKPKGEG, RTVICYICGKEFGTLSLPIHEPKCLEKWKM, and QLVFCPHCSRIFTSDRLLVHQRSCKTHPYG. Cys168, Cys171, His183, Cys187, Cys224, Cys227, His239, Cys243, Cys287, Cys290, His302, and Cys306 together coordinate Zn(2+). The tract at residues 187–214 is disordered; that stretch reads CKPKGEGPRAPHSNSSDHLTGLKKACSG.

Zn(2+) serves as cofactor.

The polypeptide is Zinc finger protein 474 (ZNF474) (Homo sapiens (Human)).